The primary structure comprises 270 residues: MSQLLRKPERAEISKGVTLVHDVTADNASLEYVSFKALDLSQGATYSETLENKECCIVVVTGKVHVTDHEVTFENIGTRESVFEKKPTDSVYVSNNQTFSIEAVTGARVALCYAPSKNQLPTKLIKAEDNGVEHRGKGNNQRMVHNILPDSDPSANSLLVVEVFTESGNWSSYPPHKHDRDLLPEESLLEETYYHEVNPKQGFVFQRVYTDDRSLDETMTVENENMVIVPKGYHPVGVPEGYASYYLNVMAGPKRIWKFFNDPAHEWIIE.

The protein belongs to the isomerase IolB family.

The catalysed reaction is 5-deoxy-D-glucuronate = 5-dehydro-2-deoxy-D-gluconate. It participates in polyol metabolism; myo-inositol degradation into acetyl-CoA; acetyl-CoA from myo-inositol: step 4/7. In terms of biological role, involved in the isomerization of 5-deoxy-glucuronate (5DG) to 5-dehydro-2-deoxy-D-gluconate (DKG or 2-deoxy-5-keto-D-gluconate). This is 5-deoxy-glucuronate isomerase from Halalkalibacterium halodurans (strain ATCC BAA-125 / DSM 18197 / FERM 7344 / JCM 9153 / C-125) (Bacillus halodurans).